The primary structure comprises 379 residues: Histidinol-phosphate aminotransferase (379 aa).

Lys-236 is subject to N6-(pyridoxal phosphate)lysine.

It belongs to the class-II pyridoxal-phosphate-dependent aminotransferase family. Histidinol-phosphate aminotransferase subfamily. In terms of assembly, homodimer. Pyridoxal 5'-phosphate is required as a cofactor.

It carries out the reaction L-histidinol phosphate + 2-oxoglutarate = 3-(imidazol-4-yl)-2-oxopropyl phosphate + L-glutamate. It functions in the pathway amino-acid biosynthesis; L-histidine biosynthesis; L-histidine from 5-phospho-alpha-D-ribose 1-diphosphate: step 7/9. In Desulfotalea psychrophila (strain LSv54 / DSM 12343), this protein is Histidinol-phosphate aminotransferase.